An 89-amino-acid polypeptide reads, in one-letter code: Small ribosomal subunit protein uS15 (89 aa).

The protein belongs to the universal ribosomal protein uS15 family. In terms of assembly, part of the 30S ribosomal subunit. Forms a bridge to the 50S subunit in the 70S ribosome, contacting the 23S rRNA.

In terms of biological role, one of the primary rRNA binding proteins, it binds directly to 16S rRNA where it helps nucleate assembly of the platform of the 30S subunit by binding and bridging several RNA helices of the 16S rRNA. Functionally, forms an intersubunit bridge (bridge B4) with the 23S rRNA of the 50S subunit in the ribosome. The sequence is that of Small ribosomal subunit protein uS15 from Shewanella woodyi (strain ATCC 51908 / MS32).